The sequence spans 111 residues: Large ribosomal subunit protein uL22 (111 aa).

This sequence belongs to the universal ribosomal protein uL22 family. As to quaternary structure, part of the 50S ribosomal subunit.

This protein binds specifically to 23S rRNA; its binding is stimulated by other ribosomal proteins, e.g. L4, L17, and L20. It is important during the early stages of 50S assembly. It makes multiple contacts with different domains of the 23S rRNA in the assembled 50S subunit and ribosome. Functionally, the globular domain of the protein is located near the polypeptide exit tunnel on the outside of the subunit, while an extended beta-hairpin is found that lines the wall of the exit tunnel in the center of the 70S ribosome. The chain is Large ribosomal subunit protein uL22 from Xylella fastidiosa (strain M23).